The sequence spans 97 residues: Ferredoxin-3 (97 aa).

2 4Fe-4S ferredoxin-type domains span residues 18–47 and 65–95; these read FAES…LKAL and KVMV…HNPL. [4Fe-4S] cluster contacts are provided by Cys27, Cys30, Cys33, Cys37, Cys75, Cys78, Cys81, and Cys85.

Homodimer. [4Fe-4S] cluster is required as a cofactor.

Functionally, ferredoxins are iron-sulfur proteins that transfer electrons in a wide variety of metabolic reactions. This Nostoc sp. (strain PCC 7120 / SAG 25.82 / UTEX 2576) protein is Ferredoxin-3 (fdxB).